A 158-amino-acid polypeptide reads, in one-letter code: Small ribosomal subunit protein uS19 (158 aa).

Belongs to the universal ribosomal protein uS19 family.

In terms of biological role, protein S19 forms a complex with S13 that binds strongly to the 16S ribosomal RNA. This Pyrobaculum calidifontis (strain DSM 21063 / JCM 11548 / VA1) protein is Small ribosomal subunit protein uS19.